A 595-amino-acid chain; its full sequence is MDTLHHRFQQFQKTIWFNIFCYLWTGIFSFLAFAPVSLTHFVWIAPFGFFWLSLKYHGKYKKLFFHGLLIGVVFYAISFHWIIHMAITFGNFPYVVAILILLFAGLLFGLKFPIFMMSFSFLSGKIGRHSVWVAGFCGLLSELIGPQLFPWYWGNLAAGNIILAQNAEITGVYGISFLVFIVSYTLFQSNPWHWKEIIHSKEKRKQYLRFITLPALLLLTFIVSGIFLFKKWENVKPVKSLNVLIVQPDAPLSFRDGREIKESIEALMARIEKLTDEGAVRLGKKPDLIVLPEAGVPFFSAHKTEITTKVRRMYWDRFDSLMFLLANRYKANVFFNEIDAGFKGAPSPRNLRYYNNNVLYDPNGDRRDSYQKKFLLMFGEYMPFDFLYELSQQTGRFEPGLTHNLIRYYTPRYYTLAEKEKSPKGRHLGWTDTETFNHEAVRSYYETTRTEVSETGKFLPLICYEVILPEFVREFRTAGNPEFIVNLTNDKWYGATTESDQHMELGRLRSIELRRWMVRSTNSGISANIDHLGRFVGNKKTGLMTAEALSETIDVIDSPPTFYTQYGNLIPWLMLFLTGIYYLNLLIGIRRGKSS.

The next 5 membrane-spanning stretches (helical) occupy residues 30–50 (FLAF…FGFF), 63–83 (LFFH…HWII), 95–115 (VVAI…FPIF), 167–187 (AEIT…YTLF), and 210–230 (FITL…FLFK). The region spanning 241-555 (LNVLIVQPDA…AEALSETIDV (315 aa)) is the CN hydrolase domain. Residue Glu-293 is the Proton acceptor of the active site. Residue Lys-372 is part of the active site. The Nucleophile role is filled by Cys-463. Residues 569–589 (LIPWLMLFLTGIYYLNLLIGI) traverse the membrane as a helical segment.

The protein belongs to the CN hydrolase family. Apolipoprotein N-acyltransferase subfamily.

It is found in the cell inner membrane. The catalysed reaction is N-terminal S-1,2-diacyl-sn-glyceryl-L-cysteinyl-[lipoprotein] + a glycerophospholipid = N-acyl-S-1,2-diacyl-sn-glyceryl-L-cysteinyl-[lipoprotein] + a 2-acyl-sn-glycero-3-phospholipid + H(+). The protein operates within protein modification; lipoprotein biosynthesis (N-acyl transfer). Catalyzes the phospholipid dependent N-acylation of the N-terminal cysteine of apolipoprotein, the last step in lipoprotein maturation. The chain is Apolipoprotein N-acyltransferase 2 from Leptospira interrogans serogroup Icterohaemorrhagiae serovar copenhageni (strain Fiocruz L1-130).